The chain runs to 107 residues: NADH-quinone oxidoreductase subunit K (107 aa).

Helical transmembrane passes span 9–29 (IGVN…MFAV), 36–56 (IVIL…FLTF), and 68–88 (FSLF…AIVI).

The protein belongs to the complex I subunit 4L family. NDH-1 is composed of 14 different subunits. Subunits NuoA, H, J, K, L, M, N constitute the membrane sector of the complex.

It localises to the cell inner membrane. The catalysed reaction is a quinone + NADH + 5 H(+)(in) = a quinol + NAD(+) + 4 H(+)(out). In terms of biological role, NDH-1 shuttles electrons from NADH, via FMN and iron-sulfur (Fe-S) centers, to quinones in the respiratory chain. The immediate electron acceptor for the enzyme in this species is believed to be a menaquinone. Couples the redox reaction to proton translocation (for every two electrons transferred, four hydrogen ions are translocated across the cytoplasmic membrane), and thus conserves the redox energy in a proton gradient. This Chlorobaculum tepidum (strain ATCC 49652 / DSM 12025 / NBRC 103806 / TLS) (Chlorobium tepidum) protein is NADH-quinone oxidoreductase subunit K.